The chain runs to 78 residues: NAD(P)H-quinone oxidoreductase subunit L (78 aa).

2 helical membrane passes run 10–30 (IILI…PAIV) and 47–67 (VFMY…SPFL).

The protein belongs to the complex I NdhL subunit family. In terms of assembly, NDH-1 can be composed of about 15 different subunits; different subcomplexes with different compositions have been identified which probably have different functions.

The protein resides in the cellular thylakoid membrane. It carries out the reaction a plastoquinone + NADH + (n+1) H(+)(in) = a plastoquinol + NAD(+) + n H(+)(out). It catalyses the reaction a plastoquinone + NADPH + (n+1) H(+)(in) = a plastoquinol + NADP(+) + n H(+)(out). Functionally, NDH-1 shuttles electrons from an unknown electron donor, via FMN and iron-sulfur (Fe-S) centers, to quinones in the respiratory and/or the photosynthetic chain. The immediate electron acceptor for the enzyme in this species is believed to be plastoquinone. Couples the redox reaction to proton translocation, and thus conserves the redox energy in a proton gradient. Cyanobacterial NDH-1 also plays a role in inorganic carbon-concentration. This Trichodesmium erythraeum (strain IMS101) protein is NAD(P)H-quinone oxidoreductase subunit L.